Consider the following 315-residue polypeptide: 4-diphosphocytidyl-2-C-methyl-D-erythritol kinase (315 aa).

Lysine 11 is a catalytic residue. 99-109 (PMAAGLAGGSA) provides a ligand contact to ATP. The active site involves aspartate 141.

It belongs to the GHMP kinase family. IspE subfamily.

The catalysed reaction is 4-CDP-2-C-methyl-D-erythritol + ATP = 4-CDP-2-C-methyl-D-erythritol 2-phosphate + ADP + H(+). The protein operates within isoprenoid biosynthesis; isopentenyl diphosphate biosynthesis via DXP pathway; isopentenyl diphosphate from 1-deoxy-D-xylulose 5-phosphate: step 3/6. In terms of biological role, catalyzes the phosphorylation of the position 2 hydroxy group of 4-diphosphocytidyl-2C-methyl-D-erythritol. This is 4-diphosphocytidyl-2-C-methyl-D-erythritol kinase from Synechocystis sp. (strain ATCC 27184 / PCC 6803 / Kazusa).